The chain runs to 208 residues: Uracil phosphoribosyltransferase (208 aa).

5-phospho-alpha-D-ribose 1-diphosphate is bound by residues R78, R103, and 130 to 138 (DPMFATGGT). Uracil-binding positions include I193 and 198–200 (GDA). D199 is a binding site for 5-phospho-alpha-D-ribose 1-diphosphate.

The protein belongs to the UPRTase family. Mg(2+) is required as a cofactor.

It carries out the reaction UMP + diphosphate = 5-phospho-alpha-D-ribose 1-diphosphate + uracil. It functions in the pathway pyrimidine metabolism; UMP biosynthesis via salvage pathway; UMP from uracil: step 1/1. Its activity is regulated as follows. Allosterically activated by GTP. Functionally, catalyzes the conversion of uracil and 5-phospho-alpha-D-ribose 1-diphosphate (PRPP) to UMP and diphosphate. This chain is Uracil phosphoribosyltransferase, found in Campylobacter jejuni subsp. jejuni serotype O:2 (strain ATCC 700819 / NCTC 11168).